A 232-amino-acid chain; its full sequence is 2,3-bisphosphoglycerate-dependent phosphoglycerate mutase (232 aa).

Substrate is bound by residues 10-17 (RHGESQWN), 23-24 (TG), R62, 89-92 (ERHY), K100, 116-117 (RR), and 186-187 (GN). Residue H11 is the Tele-phosphohistidine intermediate of the active site. The active-site Proton donor/acceptor is the E89.

The protein belongs to the phosphoglycerate mutase family. BPG-dependent PGAM subfamily. In terms of assembly, homodimer.

It catalyses the reaction (2R)-2-phosphoglycerate = (2R)-3-phosphoglycerate. The protein operates within carbohydrate degradation; glycolysis; pyruvate from D-glyceraldehyde 3-phosphate: step 3/5. Functionally, catalyzes the interconversion of 2-phosphoglycerate and 3-phosphoglycerate. This chain is 2,3-bisphosphoglycerate-dependent phosphoglycerate mutase, found in Blochmanniella pennsylvanica (strain BPEN).